A 310-amino-acid chain; its full sequence is Nucleotide-binding protein BLA_1368 (310 aa).

Positions 1–21 are disordered; that stretch reads MQSARNEQRGTGPESPHAASP. 32 to 39 serves as a coordination point for ATP; that stretch reads GMSGAGRS. 83–86 contacts GTP; that stretch reads DVRS.

It belongs to the RapZ-like family.

In terms of biological role, displays ATPase and GTPase activities. The polypeptide is Nucleotide-binding protein BLA_1368 (Bifidobacterium animalis subsp. lactis (strain AD011)).